Here is a 220-residue protein sequence, read N- to C-terminus: Deoxyribose-phosphate aldolase 1 (220 aa).

Aspartate 89 functions as the Proton donor/acceptor in the catalytic mechanism. Lysine 151 serves as the catalytic Schiff-base intermediate with acetaldehyde. Lysine 180 (proton donor/acceptor) is an active-site residue.

It belongs to the DeoC/FbaB aldolase family. DeoC type 1 subfamily.

It localises to the cytoplasm. The enzyme catalyses 2-deoxy-D-ribose 5-phosphate = D-glyceraldehyde 3-phosphate + acetaldehyde. Its pathway is carbohydrate degradation; 2-deoxy-D-ribose 1-phosphate degradation; D-glyceraldehyde 3-phosphate and acetaldehyde from 2-deoxy-alpha-D-ribose 1-phosphate: step 2/2. Its function is as follows. Catalyzes a reversible aldol reaction between acetaldehyde and D-glyceraldehyde 3-phosphate to generate 2-deoxy-D-ribose 5-phosphate. In Staphylococcus aureus (strain MSSA476), this protein is Deoxyribose-phosphate aldolase 1.